The following is a 413-amino-acid chain: Histidine--tRNA ligase (413 aa).

The protein belongs to the class-II aminoacyl-tRNA synthetase family. Homodimer.

The protein resides in the cytoplasm. It carries out the reaction tRNA(His) + L-histidine + ATP = L-histidyl-tRNA(His) + AMP + diphosphate + H(+). This Ehrlichia canis (strain Jake) protein is Histidine--tRNA ligase.